The primary structure comprises 241 residues: RxLR effector protein SFI5 (241 aa).

The first 20 residues, 1 to 20 (MLRQARPLVVLIAVTFLVAS), serve as a signal peptide directing secretion. Positions 44-62 (RLLRTHHATIKVNADSEER) match the RxLR-dEER motif.

Belongs to the RxLR effector family.

It localises to the secreted. The protein resides in the host cell membrane. Functionally, effector that suppresses flg22-induced post-translational MAP kinase activation in tomato but not in Arabidopsis. The perception of highly conserved pathogen- or microbe-associated molecular patterns (PAMPs/MAMPs), such as flg22, triggers converging signaling pathways recruiting MAP kinase cascades and inducing transcriptional re-programming, yielding a generic antimicrobial response. This chain is RxLR effector protein SFI5, found in Phytophthora infestans (strain T30-4) (Potato late blight agent).